Reading from the N-terminus, the 204-residue chain is Phosphopantothenoylcysteine decarboxylase (204 aa).

Residues Phe59 and 104–107 (DANT) contribute to the FMN site. Asn140 is a binding site for substrate. The Proton donor role is filled by Cys173.

Belongs to the HFCD (homooligomeric flavin containing Cys decarboxylase) superfamily. Homotrimer. FMN is required as a cofactor.

The enzyme catalyses N-[(R)-4-phosphopantothenoyl]-L-cysteine + H(+) = (R)-4'-phosphopantetheine + CO2. It functions in the pathway cofactor biosynthesis; coenzyme A biosynthesis; CoA from (R)-pantothenate: step 3/5. In terms of biological role, catalyzes the decarboxylation of the cysteine moiety of 4-phosphopantothenoylcysteine to form 4'-phosphopantotheine and this reaction forms part of the biosynthesis of coenzyme A. This Homo sapiens (Human) protein is Phosphopantothenoylcysteine decarboxylase (PPCDC).